We begin with the raw amino-acid sequence, 343 residues long: ATPase GET3 (343 aa).

32 to 39 (KGGVGKTT) serves as a coordination point for ATP. The active site involves D61. 2 residues coordinate ATP: E245 and N272. C283 and C286 together coordinate Zn(2+).

This sequence belongs to the arsA ATPase family. Homodimer.

The protein resides in the cytoplasm. It is found in the endoplasmic reticulum. Its function is as follows. ATPase required for the post-translational delivery of tail-anchored (TA) proteins to the endoplasmic reticulum. Recognizes and selectively binds the transmembrane domain of TA proteins in the cytosol. This complex then targets to the endoplasmic reticulum by membrane-bound receptors, where the tail-anchored protein is released for insertion. This process is regulated by ATP binding and hydrolysis. ATP binding drives the homodimer towards the closed dimer state, facilitating recognition of newly synthesized TA membrane proteins. ATP hydrolysis is required for insertion. Subsequently, the homodimer reverts towards the open dimer state, lowering its affinity for the membrane-bound receptor, and returning it to the cytosol to initiate a new round of targeting. The sequence is that of ATPase GET3 from Pyricularia oryzae (strain 70-15 / ATCC MYA-4617 / FGSC 8958) (Rice blast fungus).